Here is a 947-residue protein sequence, read N- to C-terminus: Bifunctional glutamine synthetase adenylyltransferase/adenylyl-removing enzyme (947 aa).

Positions Met1 to Glu440 are adenylyl removase. Residues Ser450–Val947 form an adenylyl transferase region.

It belongs to the GlnE family. Mg(2+) is required as a cofactor.

The catalysed reaction is [glutamine synthetase]-O(4)-(5'-adenylyl)-L-tyrosine + phosphate = [glutamine synthetase]-L-tyrosine + ADP. It catalyses the reaction [glutamine synthetase]-L-tyrosine + ATP = [glutamine synthetase]-O(4)-(5'-adenylyl)-L-tyrosine + diphosphate. Its function is as follows. Involved in the regulation of glutamine synthetase GlnA, a key enzyme in the process to assimilate ammonia. When cellular nitrogen levels are high, the C-terminal adenylyl transferase (AT) inactivates GlnA by covalent transfer of an adenylyl group from ATP to specific tyrosine residue of GlnA, thus reducing its activity. Conversely, when nitrogen levels are low, the N-terminal adenylyl removase (AR) activates GlnA by removing the adenylyl group by phosphorolysis, increasing its activity. The regulatory region of GlnE binds the signal transduction protein PII (GlnB) which indicates the nitrogen status of the cell. In Salmonella typhimurium (strain LT2 / SGSC1412 / ATCC 700720), this protein is Bifunctional glutamine synthetase adenylyltransferase/adenylyl-removing enzyme.